We begin with the raw amino-acid sequence, 556 residues long: 2,3-bisphosphoglycerate-independent phosphoglycerate mutase (556 aa).

The Mn(2+) site is built by Asp-25 and Ser-78. Ser-78 functions as the Phosphoserine intermediate in the catalytic mechanism. Residues His-137, 167–168, Arg-203, Arg-210, 283–286, and Lys-358 contribute to the substrate site; these read RD and RADR. Residues Asp-427, His-431, Asp-468, His-469, and His-498 each contribute to the Mn(2+) site.

This sequence belongs to the BPG-independent phosphoglycerate mutase family. Monomer. The cofactor is Mn(2+). In terms of tissue distribution, found ubiquitously in germinating seed.

The protein localises to the cytoplasm. It catalyses the reaction (2R)-2-phosphoglycerate = (2R)-3-phosphoglycerate. Its pathway is carbohydrate degradation; glycolysis; pyruvate from D-glyceraldehyde 3-phosphate: step 3/5. In terms of biological role, catalyzes the interconversion of 2-phosphoglycerate and 3-phosphoglycerate. This Ricinus communis (Castor bean) protein is 2,3-bisphosphoglycerate-independent phosphoglycerate mutase.